Reading from the N-terminus, the 135-residue chain is ATP synthase epsilon chain (135 aa).

The protein belongs to the ATPase epsilon chain family. F-type ATPases have 2 components, CF(1) - the catalytic core - and CF(0) - the membrane proton channel. CF(1) has five subunits: alpha(3), beta(3), gamma(1), delta(1), epsilon(1). CF(0) has three main subunits: a, b and c.

It localises to the cell inner membrane. Produces ATP from ADP in the presence of a proton gradient across the membrane. The protein is ATP synthase epsilon chain of Rhodopseudomonas palustris (strain BisB18).